The sequence spans 360 residues: Phosphoserine aminotransferase (360 aa).

Arginine 41 contributes to the L-glutamate binding site. Residues 75–76 (AS), tryptophan 101, threonine 151, aspartate 171, and glutamine 194 each bind pyridoxal 5'-phosphate. Position 195 is an N6-(pyridoxal phosphate)lysine (lysine 195). Residue 236–237 (NT) participates in pyridoxal 5'-phosphate binding.

Belongs to the class-V pyridoxal-phosphate-dependent aminotransferase family. SerC subfamily. Homodimer. Requires pyridoxal 5'-phosphate as cofactor.

The protein resides in the cytoplasm. The enzyme catalyses O-phospho-L-serine + 2-oxoglutarate = 3-phosphooxypyruvate + L-glutamate. It carries out the reaction 4-(phosphooxy)-L-threonine + 2-oxoglutarate = (R)-3-hydroxy-2-oxo-4-phosphooxybutanoate + L-glutamate. Its pathway is amino-acid biosynthesis; L-serine biosynthesis; L-serine from 3-phospho-D-glycerate: step 2/3. The protein operates within cofactor biosynthesis; pyridoxine 5'-phosphate biosynthesis; pyridoxine 5'-phosphate from D-erythrose 4-phosphate: step 3/5. Catalyzes the reversible conversion of 3-phosphohydroxypyruvate to phosphoserine and of 3-hydroxy-2-oxo-4-phosphonooxybutanoate to phosphohydroxythreonine. This chain is Phosphoserine aminotransferase, found in Herpetosiphon aurantiacus (strain ATCC 23779 / DSM 785 / 114-95).